Consider the following 335-residue polypeptide: PA-phosphatase related-family protein DDB_G0275547 (335 aa).

6 helical membrane-spanning segments follow: residues 43–63, 93–113, 124–144, 202–222, 226–246, and 254–274; these read VMYLFDWMMVVILLIVGGILF, VLIPVIIALPLAIIIVVSLIV, ILGLAQSLALTLLLTGSFKCF, SITAASFGFLALFIHAKFKIF, GHIFLYVIVSGCIIGAGLIGI, and HTFLNVLAGWSIGLIIALSCY.

This sequence belongs to the PA-phosphatase related phosphoesterase family.

It localises to the membrane. This Dictyostelium discoideum (Social amoeba) protein is PA-phosphatase related-family protein DDB_G0275547.